The chain runs to 212 residues: MVQTAPSIFLSAALIALAYLIGSIPFAVVVSKLMGLQDPRSYGSKNPGATNVLRSGNKAAAALTLLGDAFKGWFALWLAQMLAPGLSWTVFALVALAAFLGHLYPVFLGFKGGKGVATALGILLAIHPGLALATAATWVIIAVFFRYSSLAALVAAFFAPVYYLFGSGVAWYAQGPVGVALAIITLLLFYRHRANIARLLAGTESRIGAKKK.

6 helical membrane passes run 8-28 (IFLS…PFAV), 59-79 (AAAA…LWLA), 90-110 (VFAL…FLGF), 122-142 (ILLA…VIIA), 148-168 (SSLA…FGSG), and 169-189 (VAWY…LLLF).

The protein belongs to the PlsY family. In terms of assembly, probably interacts with PlsX.

The protein resides in the cell inner membrane. It catalyses the reaction an acyl phosphate + sn-glycerol 3-phosphate = a 1-acyl-sn-glycero-3-phosphate + phosphate. The protein operates within lipid metabolism; phospholipid metabolism. Catalyzes the transfer of an acyl group from acyl-phosphate (acyl-PO(4)) to glycerol-3-phosphate (G3P) to form lysophosphatidic acid (LPA). This enzyme utilizes acyl-phosphate as fatty acyl donor, but not acyl-CoA or acyl-ACP. The polypeptide is Glycerol-3-phosphate acyltransferase (Bordetella petrii (strain ATCC BAA-461 / DSM 12804 / CCUG 43448)).